A 131-amino-acid chain; its full sequence is Leptin receptor gene-related protein (131 aa).

The next 4 membrane-spanning stretches (helical) occupy residues 7-27, 32-52, 69-89, and 100-120; these read LVALSFSGAIGLTFLMLGCAL, VYWPLFVLIFHAISPIPHFIA, LAYFFTTGIVVSAFGFPVILA, and GLVLAGNAVIFLTIQGFFLVF.

The protein belongs to the OB-RGRP/VPS55 family. As to quaternary structure, interacts with LEPR. Interacts with RAB13.

It is found in the golgi apparatus membrane. Its subcellular location is the endosome membrane. In terms of biological role, negatively regulates leptin receptor (LEPR) cell surface expression, and thus decreases response to leptin/LEP. Negatively regulates growth hormone (GH) receptor cell surface expression in liver. May play a role in liver resistance to GH during periods of reduced nutrient availability. This is Leptin receptor gene-related protein (LEPROT) from Bos taurus (Bovine).